The sequence spans 198 residues: Probable opine utilization operon repressor (198 aa).

It functions in the pathway opine metabolism; mannopine biosynthesis [regulation]. Possible repressor for genes for mannityl-opine utilization and / or plasmid conjugative transfer. The polypeptide is Probable opine utilization operon repressor (opnR) (Rhizobium rhizogenes (Agrobacterium rhizogenes)).